The following is a 49-amino-acid chain: Large ribosomal subunit protein bL33B (49 aa).

Belongs to the bacterial ribosomal protein bL33 family.

The sequence is that of Large ribosomal subunit protein bL33B from Bacillus cytotoxicus (strain DSM 22905 / CIP 110041 / 391-98 / NVH 391-98).